A 188-amino-acid chain; its full sequence is dCTP deaminase (188 aa).

DCTP contacts are provided by residues 111-116 (KSTYAR), 135-137 (TLE), Gln-156, Tyr-170, and Gln-180. The Proton donor/acceptor role is filled by Glu-137.

This sequence belongs to the dCTP deaminase family. In terms of assembly, homotrimer.

It catalyses the reaction dCTP + H2O + H(+) = dUTP + NH4(+). It participates in pyrimidine metabolism; dUMP biosynthesis; dUMP from dCTP (dUTP route): step 1/2. Its function is as follows. Catalyzes the deamination of dCTP to dUTP. This Pseudomonas putida (strain ATCC 700007 / DSM 6899 / JCM 31910 / BCRC 17059 / LMG 24140 / F1) protein is dCTP deaminase.